The primary structure comprises 413 residues: Cyclic AMP-dependent transcription factor ATF-7 (413 aa).

Residues 1 to 285 (MGDDRPFVCS…GMVVGTASTM (285 aa)) form a transactivation domain region. A C2H2-type zinc finger spans residues 7–31 (FVCSAPGCGQRFTNEDHLAVHKHKH). T51 carries the post-translational modification Phosphothreonine; by MAPK11. Phosphothreonine is present on residues T53 and T101. 2 disordered regions span residues 81-140 (ASDD…TTKP) and 299-337 (HPDA…RRQR). Residue K107 forms a Glycyl lysine isopeptide (Lys-Gly) (interchain with G-Cter in SUMO1) linkage. Composition is skewed to low complexity over residues 114-126 (VDSS…ASSP) and 307-320 (QPQV…PSTG). Over residues 326 to 337 (TVDEDPDERRQR) the composition is skewed to basic and acidic residues. Residues 332–395 (DERRQRFLER…AQLKQLLLAH (64 aa)) enclose the bZIP domain. The interval 334–354 (RRQRFLERNRAAASRCRQKRK) is basic motif. The interval 360 to 388 (LEKKAEELTSQNIQLSNEVTLLRNEVAQL) is leucine-zipper.

Belongs to the bZIP family. In terms of assembly, homodimer; binds DNA as homodimer. Heterodimer; heterodimerizes with other members of ATF family and with JUN family members. Interacts with JNK2; the interaction does not phosphorylate ATF7 but acts as a docking site for other ATF-associated partners such as JUN family members. Interacts (via its transactivation domain) with TAF12 the interaction potentiates the transactivation activity and is inhibited by ATF7 sumoylation. Interacts with TAF4; the interaction inhibits the TAF12-dependent transactivation. Interacts with MAPK9; the interaction does not phosphorylate ATF7 but acts as a docking site for ATF7-associated partners such as JUN. Interacts with Ku complex components XRCC6 and XRCC7. Interacts with TERT. On EGF stimulation, phosphorylated first on Thr-53 allowing subsequent phosphorylation on Thr-51. This latter phosphorylation prevents sumoylation, increases binding to TAF12 and enhances transcriptional activity. Social isolation stress as well as TNF-alpha also induce the phosphorylation of ATF7. Phosphorylated in proliferating colonic and small intestinal epithelial cells. In terms of processing, sumoylation delays nuclear localization and inhibits transactivation activity through preventing binding to TAF12. RANBP2 appears to be the specific E3 ligase.

Its subcellular location is the nucleus. The protein localises to the nucleoplasm. It localises to the chromosome. The protein resides in the telomere. Functionally, stress-responsive chromatin regulator that plays a role in various biological processes including innate immunological memory, adipocyte differentiation or telomerase regulation. In absence of stress, contributes to the formation of heterochromatin and heterochromatin-like structure by recruiting histone H3K9 tri- and di-methyltransferases thus silencing the transcription of target genes such as Htr5b, STAT1 in adipocytes, or genes involved in innate immunity in macrophages and adipocytes. Phosphorylation of ATF7 disrupts interactions with histone methyltransferase and enhances the association with coactivators containing histone acetyltransferase and/or histone demethylase, leading to disruption of the heterochromatin-like structure and subsequently transcriptional activation. In response to TNF-alpha, which is induced by various stresses, phosphorylated ATF7 and telomerase are released from telomeres leading to telomere shortening. Also plays a role in maintaining epithelial regenerative capacity and protecting against cell death during intestinal epithelial damage and repair. The polypeptide is Cyclic AMP-dependent transcription factor ATF-7 (Atf7) (Mus musculus (Mouse)).